Here is a 211-residue protein sequence, read N- to C-terminus: MAGGKIPIVGIVACLQPEMGIGFRGGLPWRLPSEMKYFRQVTSLTKDPNKKNALIMGRKTWESIPPKFRPLPNRMNVIISRSFKDDFVHDKERSIVQSNSLANAIMNLESNFKEHLERIYVIGGGEVYSQIFSITDHWLITKINPLDKNATPAMDTFLDAKKLEEVFSEQDPAQLKEFLPPKVELPETDCDQRYSLEEKGYCFEFTLYNRK.

Residues 7 to 210 (PIVGIVACLQ…YCFEFTLYNR (204 aa)) enclose the DHFR domain. Residues alanine 13 and 20–26 (GIGFRGG) contribute to the NADP(+) site. 34–39 (EMKYFR) contacts substrate. NADP(+) is bound at residue 58–60 (RKT). Arginine 74 contacts substrate. NADP(+) contacts are provided by residues 80-82 (SRS) and 123-130 (GGGEVYSQ).

Belongs to the dihydrofolate reductase family.

It carries out the reaction (6S)-5,6,7,8-tetrahydrofolate + NADP(+) = 7,8-dihydrofolate + NADPH + H(+). Its pathway is cofactor biosynthesis; tetrahydrofolate biosynthesis; 5,6,7,8-tetrahydrofolate from 7,8-dihydrofolate: step 1/1. In terms of biological role, key enzyme in folate metabolism. Catalyzes an essential reaction for de novo glycine and purine synthesis, and for DNA precursor synthesis. The sequence is that of Dihydrofolate reductase (DFR1) from Saccharomyces cerevisiae (strain ATCC 204508 / S288c) (Baker's yeast).